Consider the following 147-residue polypeptide: Nudix hydrolase 1 (147 aa).

S2 is modified (N-acetylserine). The region spanning 7-140 (IPRVAVVVFI…EKLFGSGFNP (134 aa)) is the Nudix hydrolase domain. The Nudix box motif lies at 41 to 62 (GHLEFGESFEECAAREVMEETG). Mg(2+) contacts are provided by E56 and E60.

Belongs to the Nudix hydrolase family. In terms of assembly, homodimer. The cofactor is Mg(2+). Requires Mn(2+) as cofactor. In terms of tissue distribution, expressed in roots, stems and leaves.

Its subcellular location is the cytoplasm. The catalysed reaction is 7,8-dihydroneopterin 3'-triphosphate + H2O = 7,8-dihydroneopterin 3'-phosphate + diphosphate + H(+). It carries out the reaction NAD(+) + H2O = beta-nicotinamide D-ribonucleotide + AMP + 2 H(+). The enzyme catalyses NADH + H2O = reduced beta-nicotinamide D-ribonucleotide + AMP + 2 H(+). It catalyses the reaction 8-oxo-dGTP + H2O = 8-oxo-dGMP + diphosphate + H(+). Mediates the hydrolysis of some nucleoside diphosphate derivatives. Its substrate specificity is unclear. In vitro, it can use NTP, dNTP, 8-oxo-GTP, 8-oxo-dGTP, dGTP, dATP, dTTP or dihydroneopterin triphosphate (DHNTP) as substrate. Has some NADH pyrophosphatase activity in vitro; however, such activity may not be relevant in vivo due to the high concentration of manganese used during the experiments. Plays an important role in protection against oxidative DNA and RNA damage by removing oxidatively damaged form of guanine. This chain is Nudix hydrolase 1 (NUDT1), found in Arabidopsis thaliana (Mouse-ear cress).